Here is a 245-residue protein sequence, read N- to C-terminus: Orotidine 5'-phosphate decarboxylase (245 aa).

Substrate-binding positions include Asp-22, Lys-44, 71–80 (DLKFHDIPNT), Thr-131, Arg-192, Gln-201, Gly-221, and Arg-222. The active-site Proton donor is Lys-73.

This sequence belongs to the OMP decarboxylase family. Type 1 subfamily. As to quaternary structure, homodimer.

The enzyme catalyses orotidine 5'-phosphate + H(+) = UMP + CO2. Its pathway is pyrimidine metabolism; UMP biosynthesis via de novo pathway; UMP from orotate: step 2/2. Functionally, catalyzes the decarboxylation of orotidine 5'-monophosphate (OMP) to uridine 5'-monophosphate (UMP). This chain is Orotidine 5'-phosphate decarboxylase, found in Shigella flexneri serotype 5b (strain 8401).